The sequence spans 451 residues: D-aminoacyl-tRNA deacylase (451 aa).

Residues 410-437 (RTADIPEGPKFGKLASGESVEIDGEEID) are disordered.

The protein belongs to the DtdA deacylase family. Monomer. It depends on Zn(2+) as a cofactor.

It carries out the reaction a D-aminoacyl-tRNA + H2O = a tRNA + a D-alpha-amino acid + H(+). The catalysed reaction is glycyl-tRNA(Ala) + H2O = tRNA(Ala) + glycine + H(+). In terms of biological role, D-aminoacyl-tRNA deacylase with broad substrate specificity. By recycling D-aminoacyl-tRNA to D-amino acids and free tRNA molecules, this enzyme counteracts the toxicity associated with the formation of D-aminoacyl-tRNA entities in vivo. The polypeptide is D-aminoacyl-tRNA deacylase (Haloarcula marismortui (strain ATCC 43049 / DSM 3752 / JCM 8966 / VKM B-1809) (Halobacterium marismortui)).